Here is a 198-residue protein sequence, read N- to C-terminus: Inner membrane-spanning protein YciB (198 aa).

The next 5 helical transmembrane spans lie at 36–56 (IYSA…AIFI), 67–87 (LTLV…SETF), 90–110 (WKAP…HFIG), 135–155 (VAWI…AFTF), and 162–182 (FKVF…GIYL).

It belongs to the YciB family.

The protein resides in the cell inner membrane. Plays a role in cell envelope biogenesis, maintenance of cell envelope integrity and membrane homeostasis. This Pseudomonas fluorescens (strain SBW25) protein is Inner membrane-spanning protein YciB.